The following is a 156-amino-acid chain: Ribosome maturation factor RimP (156 aa).

This sequence belongs to the RimP family.

It localises to the cytoplasm. Its function is as follows. Required for maturation of 30S ribosomal subunits. This is Ribosome maturation factor RimP from Halalkalibacterium halodurans (strain ATCC BAA-125 / DSM 18197 / FERM 7344 / JCM 9153 / C-125) (Bacillus halodurans).